The primary structure comprises 196 residues: Carnitine operon protein CaiE (196 aa).

The segment at Leu-176 to Arg-196 is disordered.

The protein belongs to the transferase hexapeptide repeat family.

The protein operates within amine and polyamine metabolism; carnitine metabolism. Overproduction of CaiE stimulates the activity of CaiB and CaiD. The chain is Carnitine operon protein CaiE from Escherichia fergusonii (strain ATCC 35469 / DSM 13698 / CCUG 18766 / IAM 14443 / JCM 21226 / LMG 7866 / NBRC 102419 / NCTC 12128 / CDC 0568-73).